The sequence spans 878 residues: Staphylococcal nuclease domain-containing protein 1 (878 aa).

TNase-like domains follow at residues 3–142 (QYVS…IWGP) and 167–312 (KKLN…IWKN). Phosphoserine is present on serine 316. TNase-like domains are found at residues 326–464 (KDYS…MWSG) and 493–626 (RKLS…MWHD). Positions 695–755 (KINVGMNVAA…SSLPDTYTKL (61 aa)) constitute a Tudor domain.

Its subcellular location is the cytoplasm. It localises to the cytosol. This Schizosaccharomyces pombe (strain 972 / ATCC 24843) (Fission yeast) protein is Staphylococcal nuclease domain-containing protein 1.